A 620-amino-acid chain; its full sequence is Sterile alpha motif domain-containing protein 15 (620 aa).

A disordered region spans residues 1–394; it reads MSEVSGDYNS…PNYPAGKDKL (394 aa). Basic and acidic residues-rich tracts occupy residues 62 to 83, 106 to 125, and 135 to 180; these read TRTR…DLQR, IDPE…KSVE, and TKSE…HFKS. The span at 181-191 shows a compositional bias: polar residues; the sequence is TEQSGTEQPEQ. Basic residues predominate over residues 233–242; the sequence is RPLKASKKAQ. The span at 261 to 270 shows a compositional bias: acidic residues; that stretch reads LLDDQEETQE. Composition is skewed to basic and acidic residues over residues 271-286, 295-315, 323-337, and 347-382; these read ESIK…DRKP, KSSE…DKDP, FPKE…KTGD, and IQEK…KPES. An SAM domain is found at 480–543; sequence WSPERVAEWI…SYHTRVLLGI (64 aa). Residues 594–604 are compositionally biased toward basic and acidic residues; that stretch reads EIKAEEKKEDA. The segment at 594 to 620 is disordered; it reads EIKAEEKKEDALPENSLEENEELYEAT. The span at 609–620 shows a compositional bias: acidic residues; the sequence is SLEENEELYEAT.

The chain is Sterile alpha motif domain-containing protein 15 (Samd15) from Mus musculus (Mouse).